We begin with the raw amino-acid sequence, 685 residues long: Amino acid transporter heavy chain SLC3A1 (685 aa).

The span at 1 to 10 shows a compositional bias: basic and acidic residues; it reads MDEDKGKRDP. The tract at residues 1-53 is disordered; sequence MDEDKGKRDPIQMSLKGCRTNNGFVQNEDIPEQDPDPGSRDTPQPNAVSIPAP. The Cytoplasmic segment spans residues 1 to 88; that stretch reads MDEDKGKRDP…ARYRVPREIL (88 aa). Residues 89-109 traverse the membrane as a helical; Signal-anchor for type II membrane protein segment; sequence FWLTVVSVFLLIGATIAIIVI. The Extracellular portion of the chain corresponds to 110-685; it reads SPKCLDWWQA…SALDILYSSC (576 aa). Asn-213 lines the Ca(2+) pocket. Residues Asn-213, Asn-240, and Asn-260 are each glycosylated (N-linked (GlcNAc...) asparagine). An intrachain disulfide couples Cys-241 to Cys-272. Ca(2+) contacts are provided by Asp-283, Phe-317, Leu-318, and Glu-320. A glycan (N-linked (GlcNAc...) asparagine) is linked at Asn-331. Ser-385 is subject to Phosphoserine. N-linked (GlcNAc...) asparagine glycans are attached at residues Asn-512 and Asn-522. 2 cysteine pairs are disulfide-bonded: Cys-570-Cys-666 and Cys-673-Cys-685.

Disulfide-linked heterodimer composed of the catalytic light subunit SLC7A9 and the heavy subunit SLC3A1. The heterodimer is the minimal functional unit. Assembles in non-covalently linked heterotetramers (dimers of heterodimers) and higher order oligomers; the oligomerization is mediated by SLC3A1 likely to prevent degradation in the endoplasmic reticulum and facilitate heteromer trafficking to the plasma membrane. Disulfide-linked heterodimer composed of the catalytic light subunit SLC7A13 and the heavy subunit SLC3A1. As to expression, expressed in the brush border membrane in the kidney (at protein level). Highly expressed in renal tubules in the outer stripe of the outer medulla and medullary ray (at protein level). Also detected in the renal cortex. More abundant in male than female kidneys.

It localises to the cell membrane. The protein localises to the apical cell membrane. Functionally, acts as a chaperone that facilitates biogenesis and trafficking of functional transporter heteromers to the plasma membrane. Associates with SLC7A9 to form a functional transporter complex that mediates the electrogenic exchange between cationic amino acids and neutral amino acids, with a stoichiometry of 1:1. SLC7A9-SLC3A1 transporter has system b(0,+)-like activity with high affinity for extracellular cationic amino acids and L-cystine and lower affinity for intracellular neutral amino acids. Substrate exchange is driven by high concentration of intracellular neutral amino acids and the intracellular reduction of L-cystine to L-cysteine. SLC7A9-SLC3A1 acts as a major transporter for reabsorption of L-cystine and dibasic amino acids across the brush border membrane in early proximal tubules. Associates with SLC7A13 to form a functional complex that transports anionic and neutral amino acids via exchange or facilitated diffusion. SLC7A13-SLC3A1 may act as a major transporter for L-cystine in late proximal tubules, ensuring its reabsorption from the luminal fluid in exchange for cytosolic L-glutamate or L-aspartate. This is Amino acid transporter heavy chain SLC3A1 from Mus musculus (Mouse).